The following is a 331-amino-acid chain: D-galactose/methyl-galactoside binding periplasmic protein MglB (331 aa).

An N-terminal signal peptide occupies residues 1 to 24; sequence MKKTAVLSTVAFAIALGSASASFA. Beta-D-galactose contacts are provided by Asp-38 and Asn-115. Positions 38 and 115 each coordinate beta-D-glucose. The Ca(2+) site is built by Asp-158, Asn-160, Asp-162, Lys-164, and Gln-166. Beta-D-galactose-binding residues include His-176, Asp-178, and Arg-182. Residues His-176, Asp-178, and Arg-182 each contribute to the beta-D-glucose site. Glu-229 is a Ca(2+) binding site. 3 residues coordinate beta-D-galactose: Asn-235, Asp-259, and Asn-279. The beta-D-glucose site is built by Asn-235, Asp-259, and Asn-279.

It belongs to the bacterial solute-binding protein 2 family. As to quaternary structure, the ABC transporter complex is composed of one ATP-binding protein (MglA), two transmembrane proteins (MglC) and a solute-binding protein (MglB).

The protein localises to the periplasm. In terms of biological role, part of the ABC transporter complex MglABC involved in galactose/methyl galactoside import. This is D-galactose/methyl-galactoside binding periplasmic protein MglB (mglB) from Haemophilus influenzae (strain ATCC 51907 / DSM 11121 / KW20 / Rd).